The primary structure comprises 532 residues: Phosphoenolpyruvate carboxykinase (ATP) (532 aa).

Arg58, Tyr194, and Lys200 together coordinate substrate. Residues Lys200, His220, and Gly236–Thr244 contribute to the ATP site. Residues Lys200 and His220 each contribute to the Mn(2+) site. Residue Asp257 coordinates Mn(2+). ATP contacts are provided by residues Glu285, Arg322, Arg442 to Val443, and Thr448. Arg322 is a binding site for substrate.

The protein belongs to the phosphoenolpyruvate carboxykinase (ATP) family. It depends on Mn(2+) as a cofactor.

The protein resides in the cytoplasm. It carries out the reaction oxaloacetate + ATP = phosphoenolpyruvate + ADP + CO2. Its pathway is carbohydrate biosynthesis; gluconeogenesis. Its function is as follows. Involved in the gluconeogenesis. Catalyzes the conversion of oxaloacetate (OAA) to phosphoenolpyruvate (PEP) through direct phosphoryl transfer between the nucleoside triphosphate and OAA. This Rubrobacter xylanophilus (strain DSM 9941 / JCM 11954 / NBRC 16129 / PRD-1) protein is Phosphoenolpyruvate carboxykinase (ATP).